The chain runs to 266 residues: Proteasome subunit beta type-7 (266 aa).

The propeptide occupies 1-33 (MNHDPFSWGRPADSTYGAYNTQIANAGASPMVN).

This sequence belongs to the peptidase T1B family. The 26S proteasome consists of a 20S proteasome core and two 19S regulatory subunits. The 20S proteasome core is composed of 28 subunits that are arranged in four stacked rings, resulting in a barrel-shaped structure. The two end rings are each formed by seven alpha subunits, and the two central rings are each formed by seven beta subunits. The catalytic chamber with the active sites is on the inside of the barrel. Interacts with CIC1.

It is found in the cytoplasm. Its subcellular location is the nucleus. Functionally, non-catalytic component of the proteasome which degrades poly-ubiquitinated proteins in the cytoplasm and in the nucleus. It is essential for the regulated turnover of proteins and for the removal of misfolded proteins. The proteasome is a multicatalytic proteinase complex that is characterized by its ability to cleave peptides with Arg, Phe, Tyr, Leu, and Glu adjacent to the leaving group at neutral or slightly basic pH. It has an ATP-dependent proteolytic activity. PRE3 and PRE4 are necessary for the peptidyl-glutamyl-peptide-hydrolyzing activity. The polypeptide is Proteasome subunit beta type-7 (PRE4) (Saccharomyces cerevisiae (strain ATCC 204508 / S288c) (Baker's yeast)).